The primary structure comprises 351 residues: Photosystem II D2 protein (351 aa).

Residues 39–59 (CAFLALGGWLTGTTFVTSWYT) form a helical membrane-spanning segment. His-116 contacts chlorophyll a. Residues 123-139 (GFMLRQFEIARLVGIRP) traverse the membrane as a helical segment. Gln-128 and Asn-141 together coordinate pheophytin a. A helical membrane pass occupies residues 151–164 (VFVSVFLMYPLGQS). A chlorophyll a-binding site is contributed by His-196. The chain crosses the membrane as a helical span at residues 206 to 226 (GALLCAIHGATVENTLFEDGE). The a plastoquinone site is built by His-213 and Phe-260. Position 213 (His-213) interacts with Fe cation. His-267 serves as a coordination point for Fe cation. The chain crosses the membrane as a helical span at residues 277 to 293 (GLWMSAVGIVGLALNLR).

Belongs to the reaction center PufL/M/PsbA/D family. In terms of assembly, PSII is composed of 1 copy each of membrane proteins PsbA, PsbB, PsbC, PsbD, PsbE, PsbF, PsbH, PsbI, PsbJ, PsbK, PsbL, PsbM, PsbT, PsbX, PsbY, PsbZ, Psb30/Ycf12, peripheral proteins PsbO, CyanoQ (PsbQ), PsbU, PsbV and a large number of cofactors. It forms dimeric complexes. The D1/D2 heterodimer binds P680, chlorophylls that are the primary electron donor of PSII, and subsequent electron acceptors. It shares a non-heme iron and each subunit binds pheophytin, quinone, additional chlorophylls, carotenoids and lipids. There is also a Cl(-1) ion associated with D1 and D2, which is required for oxygen evolution. The PSII complex binds additional chlorophylls, carotenoids and specific lipids. is required as a cofactor.

The protein resides in the cellular thylakoid membrane. The enzyme catalyses 2 a plastoquinone + 4 hnu + 2 H2O = 2 a plastoquinol + O2. In terms of biological role, photosystem II (PSII) is a light-driven water:plastoquinone oxidoreductase that uses light energy to abstract electrons from H(2)O, generating O(2) and a proton gradient subsequently used for ATP formation. It consists of a core antenna complex that captures photons, and an electron transfer chain that converts photonic excitation into a charge separation. The D1/D2 (PsbA/PsbD) reaction center heterodimer binds P680, the primary electron donor of PSII as well as several subsequent electron acceptors. D2 is needed for assembly of a stable PSII complex. The sequence is that of Photosystem II D2 protein from Trichormus variabilis (strain ATCC 29413 / PCC 7937) (Anabaena variabilis).